The following is an 809-amino-acid chain: Ribosome biogenesis protein ERB1 (809 aa).

The segment at 1–107 (MSKSSKVGMT…SDTRSITDAI (107 aa)) is disordered. Acidic residues-rich tracts occupy residues 30–70 (AEVD…EDSD) and 77–97 (LGEE…EPQE). The segment at 267-383 (RFVPSKHEAK…LRKVPGYQES (117 aa)) is required for interaction with NOP7. The segment at 383-419 (SVRERFERCLDLYLAPRVRHNKLNIDPESLIPELPSP) is required for interaction with YTM1. 2 WD repeats span residues 435–474 (GHTD…QVFN) and 483–523 (NDED…FDIE). The segment at 545–569 (EEKFKNDEGNEDEDDEDDSATSTAV) is disordered. A compositionally biased stretch (acidic residues) spans 553–563 (GNEDEDDEDDS). 5 WD repeats span residues 593-635 (QCRK…SQSP), 638-676 (KSKG…LVKK), 679-718 (PGVR…TPYK), 722-762 (YHEK…DLMT), and 778-809 (VNSI…LWTT).

It belongs to the WD repeat BOP1/ERB1 family. Component of the NOP7 complex, composed of ERB1, NOP7 and YTM1. The complex is held together by ERB1, which interacts with NOP7 via its N-terminal domain and with YTM1 via a high-affinity interaction between the seven-bladed beta-propeller domains of the 2 proteins. The NOP7 complex associates with the 66S pre-ribosome.

The protein localises to the nucleus. It localises to the nucleolus. It is found in the nucleoplasm. Functionally, component of the NOP7 complex, which is required for maturation of the 25S and 5.8S ribosomal RNAs and formation of the 60S ribosome. The sequence is that of Ribosome biogenesis protein ERB1 from Scheffersomyces stipitis (strain ATCC 58785 / CBS 6054 / NBRC 10063 / NRRL Y-11545) (Yeast).